Reading from the N-terminus, the 154-residue chain is Mitochondrial fission 1 protein (154 aa).

Topologically, residues 1–124 are cytoplasmic; it reads MEDLLNEVVP…KEIDKEVAKG (124 aa). Residues 125–145 form a helical membrane-spanning segment; the sequence is MVVAGGAALVLGGILGLGIAM. Over 146–154 the chain is Mitochondrial intermembrane; that stretch reads ARNKQKREK.

This sequence belongs to the FIS1 family.

Its subcellular location is the mitochondrion outer membrane. Involved in the fragmentation of the mitochondrial network and its perinuclear clustering. Functions downstream of Pink1 and upstream of Drp1 to regulate mitochondrial fission. The chain is Mitochondrial fission 1 protein from Drosophila melanogaster (Fruit fly).